The following is a 303-amino-acid chain: Crk-like protein (303 aa).

Residues 14–102 (WYMGPVSRQE…LDTTTLIEPA (89 aa)) form the SH2 domain. The SH3 1 domain maps to 123 to 183 (ENLEYVRTLY…PVPYVEKLVR (61 aa)). The residue at position 127 (Y127) is a Phosphotyrosine. A disordered region spans residues 184 to 204 (SSPHGKHGNRNSNSYGIPEPA). Position 207 is a phosphotyrosine (Y207). In terms of domain architecture, SH3 2 spans 235–296 (NGPVFAKAIQ…PFTHVKIFDP (62 aa)).

Belongs to the CRK family. Interacts with INPP5D/SHIP1. Interacts with DOCK2 and EPOR. Interacts with phosphorylated CBLB and IRS4. Interacts with BCAR1/CAS and NEDD9/HEF1.

In terms of biological role, may mediate the transduction of intracellular signals. The polypeptide is Crk-like protein (Rattus norvegicus (Rat)).